Here is a 152-residue protein sequence, read N- to C-terminus: Lipoprotein signal peptidase (152 aa).

Transmembrane regions (helical) follow at residues 33-53 (VVPP…FGLL), 58-78 (MLFV…YFKI), and 83-102 (PVLD…NLAD). Active-site residues include aspartate 111 and aspartate 125. Residues 120 to 140 (VFNLADTAIVTGAFLLAWALL) traverse the membrane as a helical segment.

Belongs to the peptidase A8 family.

Its subcellular location is the cell membrane. It catalyses the reaction Release of signal peptides from bacterial membrane prolipoproteins. Hydrolyzes -Xaa-Yaa-Zaa-|-(S,diacylglyceryl)Cys-, in which Xaa is hydrophobic (preferably Leu), and Yaa (Ala or Ser) and Zaa (Gly or Ala) have small, neutral side chains.. The protein operates within protein modification; lipoprotein biosynthesis (signal peptide cleavage). In terms of biological role, this protein specifically catalyzes the removal of signal peptides from prolipoproteins. The protein is Lipoprotein signal peptidase of Pelotomaculum thermopropionicum (strain DSM 13744 / JCM 10971 / SI).